Consider the following 338-residue polypeptide: Glyceraldehyde-3-phosphate dehydrogenase (338 aa).

NAD(+) is bound by residues 11 to 12 (TI) and Gly111. 140-142 (SCN) lines the D-glyceraldehyde 3-phosphate pocket. Cys141 (nucleophile) is an active-site residue. NAD(+) is bound at residue Arg169. The disordered stretch occupies residues 170 to 195 (GSDPSEVKKGPINSIVPNPPKVPSHH). 195–196 (HG) contacts D-glyceraldehyde 3-phosphate. Position 302 (Gln302) interacts with NAD(+).

Belongs to the glyceraldehyde-3-phosphate dehydrogenase family. As to quaternary structure, homotetramer.

It localises to the cytoplasm. The enzyme catalyses D-glyceraldehyde 3-phosphate + phosphate + NADP(+) = (2R)-3-phospho-glyceroyl phosphate + NADPH + H(+). It carries out the reaction D-glyceraldehyde 3-phosphate + phosphate + NAD(+) = (2R)-3-phospho-glyceroyl phosphate + NADH + H(+). It participates in carbohydrate degradation; glycolysis; pyruvate from D-glyceraldehyde 3-phosphate: step 1/5. The polypeptide is Glyceraldehyde-3-phosphate dehydrogenase (Methanobrevibacter smithii (strain ATCC 35061 / DSM 861 / OCM 144 / PS)).